Reading from the N-terminus, the 371-residue chain is DNA replication and repair protein RecF (371 aa).

An ATP-binding site is contributed by G30–T37.

This sequence belongs to the RecF family.

Its subcellular location is the cytoplasm. In terms of biological role, the RecF protein is involved in DNA metabolism; it is required for DNA replication and normal SOS inducibility. RecF binds preferentially to single-stranded, linear DNA. It also seems to bind ATP. This Acidothermus cellulolyticus (strain ATCC 43068 / DSM 8971 / 11B) protein is DNA replication and repair protein RecF.